The following is a 402-amino-acid chain: Probable sugar efflux transporter (402 aa).

Transmembrane regions (helical) follow at residues 15-35 (VLIMACAGFIFNTTEFVPVAM), 51-71 (GLMMTVYAWTVLIMSLPAMLA), 84-104 (LFIIFIVGHILLVIAWNFWIL), 109-129 (MCIALAHSVFWSITASLVMRI), 137-157 (QALGMLAIGTALATILGLPIG), 168-188 (VTFGIIAVLALSIMFLIIRLL), 209-229 (PLLLWLYVTTAIVISAHFTAY), 245-265 (NFATAVLLVFGFSGIAASLLF), 276-296 (FIVVSMSLLMFSLLLLLFSTE), 297-317 (AIIAMFSLVFIWGIGISCIGL), 333-353 (VATAIYSGIFNAGIGAGALFG), and 365-385 (IGYTGAALGLIGFIIFITTHL).

Belongs to the major facilitator superfamily. SotB (TC 2.A.1.2) family.

The protein localises to the cell inner membrane. In terms of biological role, involved in the efflux of sugars. The physiological role may be the reduction of the intracellular concentration of toxic sugars or sugar metabolites. This is Probable sugar efflux transporter from Haemophilus influenzae (strain 86-028NP).